We begin with the raw amino-acid sequence, 186 residues long: Single-stranded DNA-binding protein 1 (186 aa).

The 108-residue stretch at 1–108 (MDATVTVVGN…LEIDEIGPTL (108 aa)) folds into the SSB domain. Residues 119–186 (TQAGHGVSPD…EDFDSDEVPF (68 aa)) form a disordered region. Over residues 175–186 (SYEDFDSDEVPF) the composition is skewed to acidic residues.

As to quaternary structure, homotetramer.

This chain is Single-stranded DNA-binding protein 1 (ssb1), found in Tropheryma whipplei (strain Twist) (Whipple's bacillus).